Consider the following 276-residue polypeptide: Putative metal-binding protein TC_0696 (276 aa).

The first 18 residues, 1-18, serve as a signal peptide directing secretion; it reads MRLLILLLFSFGIIYSHG. A divalent metal cation is bound by residues histidine 59, histidine 121, histidine 185, and aspartate 256.

This sequence belongs to the bacterial solute-binding protein 9 family.

The protein resides in the periplasm. Functionally, part of an ATP-binding cassette (ABC) transport system involved in metal import. Binds a metal with high affinity and specificity and delivers it to the membrane permease for translocation into the cytoplasm. In Chlamydia muridarum (strain MoPn / Nigg), this protein is Putative metal-binding protein TC_0696.